The sequence spans 304 residues: tRNA pseudouridine synthase B (304 aa).

D38 (nucleophile) is an active-site residue. In terms of domain architecture, PUA spans 227-302 (LPKVEIYKDF…RIFKLKKVFK (76 aa)).

This sequence belongs to the pseudouridine synthase TruB family. Type 1 subfamily.

The catalysed reaction is uridine(55) in tRNA = pseudouridine(55) in tRNA. In terms of biological role, responsible for synthesis of pseudouridine from uracil-55 in the psi GC loop of transfer RNAs. The protein is tRNA pseudouridine synthase B of Thermosipho melanesiensis (strain DSM 12029 / CIP 104789 / BI429).